Consider the following 412-residue polypeptide: F-box/WD repeat-containing protein 4 (412 aa).

The F-box domain maps to 25–71 (GPALWRLPEELLLLICSYLDMRALGRLAQVCRWLRRFTSCDLLWRRI). WD repeat units lie at residues 154–190 (RPLGVFAGHDEDVCHFVLANSHIVSAGGDGKIGIHKI), 193–229 (TFTVKYSAHEQEVNCVDCKGGIIVSGSRDRTAKVWPL), 236–277 (QCLH…IWDL), 283–321 (MTHLGSDFPPGAGVLDVMYESPFTLLSCGYDTYVRYWDL), 327–366 (KCVMEWEEPHDSTLYCLQTDGNHLLATGSSYYGVVRLWDR), and 373–409 (HAFPLTSTPLSSPVYCLRLTTKHLYAALSYNLHVLDF).

Part of a SCF (SKP1-cullin-F-box) protein ligase complex. Interacts with POUF51. As to expression, expressed in brain, kidney, lung and liver.

Probably recognizes and binds to some phosphorylated proteins and promotes their ubiquitination and degradation. Likely to be involved in key signaling pathways crucial for normal limb development. May participate in Wnt signaling. This chain is F-box/WD repeat-containing protein 4 (FBXW4), found in Homo sapiens (Human).